The sequence spans 355 residues: 3-isopropylmalate dehydrogenase (355 aa).

Positions 90, 100, 128, and 222 each coordinate substrate. Asp222, Asp246, and Asp250 together coordinate Mg(2+). 280–292 serves as a coordination point for NAD(+); it reads GSAPDIAGKGIAN.

Belongs to the isocitrate and isopropylmalate dehydrogenases family. LeuB type 1 subfamily. In terms of assembly, homodimer. The cofactor is Mg(2+). Mn(2+) serves as cofactor.

The protein localises to the cytoplasm. It catalyses the reaction (2R,3S)-3-isopropylmalate + NAD(+) = 4-methyl-2-oxopentanoate + CO2 + NADH. It functions in the pathway amino-acid biosynthesis; L-leucine biosynthesis; L-leucine from 3-methyl-2-oxobutanoate: step 3/4. Functionally, catalyzes the oxidation of 3-carboxy-2-hydroxy-4-methylpentanoate (3-isopropylmalate) to 3-carboxy-4-methyl-2-oxopentanoate. The product decarboxylates to 4-methyl-2 oxopentanoate. This is 3-isopropylmalate dehydrogenase from Burkholderia mallei (strain ATCC 23344).